The following is a 394-amino-acid chain: DNA repair protein brc-2 (394 aa).

The segment covering 1–12 (MGDSSKKVKDSF) has biased composition (basic and acidic residues). 2 disordered regions span residues 1 to 30 (MGDSSKKVKDSFDTISEPDSFDEPKGVPIS) and 56 to 136 (MLNS…EKKK). The tract at residues 1–60 (MGDSSKKVKDSFDTISEPDSFDEPKGVPISMEPVFSTAAGIRIDVKQESIDKSKKMLNSD) is interaction with rad-51. Residues 28-62 (PISMEPVFSTAAGIRIDVKQESIDKSKKMLNSDLK) form a BRCA2 repeat-like region region. Positions 56 to 73 (MLNSDLKSKSSSKGGFSS) are enriched in low complexity. The interval 60–89 (DLKSKSSSKGGFSSPLVRKNNGSSAFVSPF) is interaction with rad-51-DNA complexes. The segment covering 124–134 (KKSKKHSKKEK) has biased composition (basic residues). Positions 371–389 (WKDFGSYLKHKEDKKKRRS) are required for ssDNA binding.

In terms of assembly, interacts (via N-terminus) with rad-51; regulates rad-51 recruitment to sites of DNA double strand breaks. As to expression, expressed in the germline, with highest expression in cells undergoing oogenesis.

It localises to the nucleus. The protein resides in the chromosome. Required for the homologous recombination repair of DNA double strand breaks, thereby playing a role in chromosome integrity. Acts by targeting rad-51 to sites of DNA damage and stabilizing rad-51-DNA filaments by blocking ATP hydrolysis catalyzed by rad-51. Promotes rad-51 mediated displacement-loop (D-loop) formation during strand invasion between the invading single-stranded DNA (ssDNA) and the homologous duplex DNA. Also functions independently of rad-51 in DNA double-strand break (DSB) repair by promoting DNA single-strand annealing (SSA) when the homologous recombination (HR) and non-homologous end joining (NHEJ) pathways are compromised. Binds selectively to single-stranded (ssDNA) via its C-terminus. Involved in telomere maintenance and replicative senescence. This is DNA repair protein brc-2 from Caenorhabditis elegans.